The chain runs to 1393 residues: DNA-directed RNA polymerase subunit beta'' (1393 aa).

Residues Cys-220, Cys-291, Cys-298, and Cys-301 each contribute to the Zn(2+) site.

The protein belongs to the RNA polymerase beta' chain family. RpoC2 subfamily. As to quaternary structure, in plastids the minimal PEP RNA polymerase catalytic core is composed of four subunits: alpha, beta, beta', and beta''. When a (nuclear-encoded) sigma factor is associated with the core the holoenzyme is formed, which can initiate transcription. It depends on Zn(2+) as a cofactor.

The protein resides in the plastid. It localises to the chloroplast. It catalyses the reaction RNA(n) + a ribonucleoside 5'-triphosphate = RNA(n+1) + diphosphate. Its function is as follows. DNA-dependent RNA polymerase catalyzes the transcription of DNA into RNA using the four ribonucleoside triphosphates as substrates. The chain is DNA-directed RNA polymerase subunit beta'' from Gossypium hirsutum (Upland cotton).